The sequence spans 253 residues: 4-phosphopantoate--beta-alanine ligase (253 aa).

ATP-binding positions include Arg-17, Arg-39, 179 to 181 (DLN), 185 to 186 (RT), and 197 to 198 (NL).

The protein belongs to the archaeal phosphopantothenate synthetase family. In terms of assembly, homodimer.

The enzyme catalyses (R)-4-phosphopantoate + beta-alanine + ATP = (R)-4'-phosphopantothenate + AMP + diphosphate + H(+). The protein operates within cofactor biosynthesis; coenzyme A biosynthesis. Functionally, catalyzes the condensation of (R)-4-phosphopantoate and beta-alanine to 4'-phosphopantothenate in the CoA biosynthesis pathway. This Methanosarcina mazei (strain ATCC BAA-159 / DSM 3647 / Goe1 / Go1 / JCM 11833 / OCM 88) (Methanosarcina frisia) protein is 4-phosphopantoate--beta-alanine ligase.